A 645-amino-acid chain; its full sequence is 1,4-alpha-glucan branching enzyme GlgB (645 aa).

Residue D309 is the Nucleophile of the active site. E352 serves as the catalytic Proton donor. Residues 619–645 (VKTRKGSKKQDGSKTKVRSNVTSRGKR) form a disordered region. The segment covering 636-645 (RSNVTSRGKR) has biased composition (polar residues).

The protein belongs to the glycosyl hydrolase 13 family. GlgB subfamily. As to quaternary structure, monomer.

It catalyses the reaction Transfers a segment of a (1-&gt;4)-alpha-D-glucan chain to a primary hydroxy group in a similar glucan chain.. Its pathway is glycan biosynthesis; glycogen biosynthesis. Its function is as follows. Catalyzes the formation of the alpha-1,6-glucosidic linkages in glycogen by scission of a 1,4-alpha-linked oligosaccharide from growing alpha-1,4-glucan chains and the subsequent attachment of the oligosaccharide to the alpha-1,6 position. The sequence is that of 1,4-alpha-glucan branching enzyme GlgB from Bacillus anthracis (strain CDC 684 / NRRL 3495).